A 468-amino-acid polypeptide reads, in one-letter code: ATP synthase subunit beta (468 aa).

ATP is bound at residue 155-162; the sequence is GGAGVGKT.

The protein belongs to the ATPase alpha/beta chains family. As to quaternary structure, F-type ATPases have 2 components, CF(1) - the catalytic core - and CF(0) - the membrane proton channel. CF(1) has five subunits: alpha(3), beta(3), gamma(1), delta(1), epsilon(1). CF(0) has three main subunits: a(1), b(2) and c(9-12). The alpha and beta chains form an alternating ring which encloses part of the gamma chain. CF(1) is attached to CF(0) by a central stalk formed by the gamma and epsilon chains, while a peripheral stalk is formed by the delta and b chains.

The protein resides in the cell membrane. The catalysed reaction is ATP + H2O + 4 H(+)(in) = ADP + phosphate + 5 H(+)(out). Functionally, produces ATP from ADP in the presence of a proton gradient across the membrane. The catalytic sites are hosted primarily by the beta subunits. The sequence is that of ATP synthase subunit beta from Streptococcus agalactiae serotype Ia (strain ATCC 27591 / A909 / CDC SS700).